A 425-amino-acid polypeptide reads, in one-letter code: Imidazolonepropionase (425 aa).

2 residues coordinate Fe(3+): H78 and H80. The Zn(2+) site is built by H78 and H80. 3 residues coordinate 4-imidazolone-5-propanoate: R87, Y150, and H183. Y150 contacts N-formimidoyl-L-glutamate. Fe(3+) is bound at residue H248. Residue H248 participates in Zn(2+) binding. Residue Q251 coordinates 4-imidazolone-5-propanoate. D323 contributes to the Fe(3+) binding site. D323 is a binding site for Zn(2+). Residues N325 and G327 each coordinate N-formimidoyl-L-glutamate. 4-imidazolone-5-propanoate is bound at residue T328.

Belongs to the metallo-dependent hydrolases superfamily. HutI family. The cofactor is Zn(2+). Requires Fe(3+) as cofactor.

It is found in the cytoplasm. It catalyses the reaction 4-imidazolone-5-propanoate + H2O = N-formimidoyl-L-glutamate. Its pathway is amino-acid degradation; L-histidine degradation into L-glutamate; N-formimidoyl-L-glutamate from L-histidine: step 3/3. Its function is as follows. Catalyzes the hydrolytic cleavage of the carbon-nitrogen bond in imidazolone-5-propanoate to yield N-formimidoyl-L-glutamate. It is the third step in the universal histidine degradation pathway. The polypeptide is Imidazolonepropionase (Polaromonas sp. (strain JS666 / ATCC BAA-500)).